The primary structure comprises 64 residues: Large ribosomal subunit protein bL35 (64 aa).

Belongs to the bacterial ribosomal protein bL35 family.

The chain is Large ribosomal subunit protein bL35 from Vibrio metschnikovii.